The following is a 178-amino-acid chain: Large ribosomal subunit protein uL6 (178 aa).

The protein belongs to the universal ribosomal protein uL6 family. As to quaternary structure, part of the 50S ribosomal subunit.

This protein binds to the 23S rRNA, and is important in its secondary structure. It is located near the subunit interface in the base of the L7/L12 stalk, and near the tRNA binding site of the peptidyltransferase center. In Streptococcus agalactiae serotype V (strain ATCC BAA-611 / 2603 V/R), this protein is Large ribosomal subunit protein uL6.